The primary structure comprises 297 residues: Ectoine dioxygenase (297 aa).

Residue Gln-131 coordinates L-ectoine. Lys-137 lines the 2-oxoglutarate pocket. Residues His-148, Asp-150, and His-249 each coordinate Fe cation.

Belongs to the PhyH family. EctD subfamily. Homodimer. Fe(2+) serves as cofactor.

The catalysed reaction is L-ectoine + 2-oxoglutarate + O2 = 5-hydroxyectoine + succinate + CO2. Its function is as follows. Involved in the biosynthesis of 5-hydroxyectoine, called compatible solute, which helps organisms to survive extreme osmotic stress by acting as a highly soluble organic osmolyte. Catalyzes the 2-oxoglutarate-dependent selective hydroxylation of L-ectoine to yield (4S,5S)-5-hydroxyectoine. The chain is Ectoine dioxygenase from Streptomyces anulatus (Streptomyces chrysomallus).